The chain runs to 154 residues: uncharacterized protein (154 aa).

This is an uncharacterized protein from Methanocaldococcus jannaschii (strain ATCC 43067 / DSM 2661 / JAL-1 / JCM 10045 / NBRC 100440) (Methanococcus jannaschii).